The following is a 160-amino-acid chain: Serine-protein kinase RsbW (160 aa).

This sequence belongs to the anti-sigma-factor family.

It catalyses the reaction L-seryl-[protein] + ATP = O-phospho-L-seryl-[protein] + ADP + H(+). The enzyme catalyses L-threonyl-[protein] + ATP = O-phospho-L-threonyl-[protein] + ADP + H(+). Negative regulator of sigma-B activity. Phosphorylates and inactivates its specific antagonist protein, RsbV. Upon phosphorylation of RsbV, RsbW is released and binds to sigma-B, thereby blocking its ability to form an RNA polymerase holoenzyme (E-sigma-B). In Bacillus mycoides (strain KBAB4) (Bacillus weihenstephanensis), this protein is Serine-protein kinase RsbW.